Here is a 797-residue protein sequence, read N- to C-terminus: MAP/microtubule affinity-regulating kinase 3 (797 aa).

The interval 1 to 35 is disordered; sequence MSTRTPLPTVNERDTENHISHGDGRQEVTSRTGRS. Basic and acidic residues predominate over residues 11–28; the sequence is NERDTENHISHGDGRQEV. Phosphoserine is present on Ser-42. One can recognise a Protein kinase domain in the interval 56 to 307; that stretch reads YRLLKTIGKG…LEQIMKDRWI (252 aa). Residues 62–70 and Lys-85 contribute to the ATP site; that span reads IGKGNFAKV. Asp-178 acts as the Proton acceptor in catalysis. Position 211 is a phosphothreonine; by LKB1 (Thr-211). Residues 326 to 365 form the UBA domain; that stretch reads ISDQKRIDIMVGMGYSQEEIQESLSKMKYDEITATYLLLG. Ser-368, Ser-374, Ser-376, Ser-380, Ser-383, Ser-400, Ser-419, and Ser-469 each carry phosphoserine. 2 disordered regions span residues 372 to 504 and 585 to 701; these read DASD…GMTR and PDQR…KPRS. A compositionally biased stretch (low complexity) spans 374-385; sequence SDSSSSSNLSLA. Over residues 391-400 the composition is skewed to polar residues; it reads SDLSNSTGQS. Polar residues-rich tracts occupy residues 492 to 504 and 585 to 602; these read VPSS…GMTR and PDQR…SATT. Phosphoserine occurs at positions 593 and 596. Thr-602 carries the post-translational modification Phosphothreonine. Thr-617 is subject to Phosphothreonine; by PKC/PRKCZ. Ser-636, Ser-651, and Ser-654 each carry phosphoserine. Over residues 637-664 the composition is skewed to polar residues; it reads PSLSHEATPLSQTRSRGSTNLFSKLTSK. Residues 669 to 678 are compositionally biased toward basic and acidic residues; the sequence is LPTEYERNGR. Residue Ser-687 is modified to Phosphoserine. Positions 689–699 are enriched in basic and acidic residues; sequence EQKDENREAKP. The KA1 domain occupies 748 to 797; that stretch reads DGHAESLVQWEMEVCKLPRLSLNGVRFKRISGTSIAFKNIASKIANELKL.

It belongs to the protein kinase superfamily. CAMK Ser/Thr protein kinase family. SNF1 subfamily. As to quaternary structure, interacts with MAPT/TAU. Interacts with DLG5 (via coiled-coil domain). Interacts with STK3/MST2 and STK4/MST1 in the presence of DLG5. Interacts with YWHAB, YWHAG, YWHAQ and YWHAZ. Interacts with PKP2 (via N-terminus). Interacts with CDC25C. Interacts with KSR1. Phosphorylated at Thr-211 by STK11/LKB1 in complex with STE20-related adapter-alpha (STRADA) pseudo kinase and CAB39. Phosphorylation at Thr-617 by PRKCZ/aPKC inhibits the kinase activity.

Its subcellular location is the cell membrane. It is found in the cell projection. It localises to the dendrite. The protein resides in the cytoplasm. The enzyme catalyses L-seryl-[protein] + ATP = O-phospho-L-seryl-[protein] + ADP + H(+). It catalyses the reaction L-threonyl-[protein] + ATP = O-phospho-L-threonyl-[protein] + ADP + H(+). With respect to regulation, activated by phosphorylation on Thr-211. Inhibited by phosphorylation on Thr-617. Functionally, serine/threonine-protein kinase. Involved in the specific phosphorylation of microtubule-associated proteins for MAP2 and MAP4. Phosphorylates the microtubule-associated protein MAPT/TAU. Phosphorylates CDC25C on 'Ser-216'. Regulates localization and activity of some histone deacetylases by mediating phosphorylation of HDAC7, promoting subsequent interaction between HDAC7 and 14-3-3 and export from the nucleus. Regulates localization and activity of MITF by mediating its phosphorylation, promoting subsequent interaction between MITF and 14-3-3 and retention in the cytosol. Negatively regulates the Hippo signaling pathway and antagonizes the phosphorylation of LATS1. Cooperates with DLG5 to inhibit the kinase activity of STK3/MST2 toward LATS1. Phosphorylates PKP2 and KSR1. The chain is MAP/microtubule affinity-regulating kinase 3 (Mark3) from Rattus norvegicus (Rat).